Reading from the N-terminus, the 422-residue chain is Serine--tRNA ligase (422 aa).

L-serine is bound at residue 230 to 232 (TAE). ATP is bound at residue 261–263 (RAE). An L-serine-binding site is contributed by Glu284. 348–351 (EISS) serves as a coordination point for ATP. Position 383 (Ser383) interacts with L-serine.

It belongs to the class-II aminoacyl-tRNA synthetase family. Type-1 seryl-tRNA synthetase subfamily. Homodimer. The tRNA molecule binds across the dimer.

Its subcellular location is the cytoplasm. The catalysed reaction is tRNA(Ser) + L-serine + ATP = L-seryl-tRNA(Ser) + AMP + diphosphate + H(+). The enzyme catalyses tRNA(Sec) + L-serine + ATP = L-seryl-tRNA(Sec) + AMP + diphosphate + H(+). Its pathway is aminoacyl-tRNA biosynthesis; selenocysteinyl-tRNA(Sec) biosynthesis; L-seryl-tRNA(Sec) from L-serine and tRNA(Sec): step 1/1. Functionally, catalyzes the attachment of serine to tRNA(Ser). Is also able to aminoacylate tRNA(Sec) with serine, to form the misacylated tRNA L-seryl-tRNA(Sec), which will be further converted into selenocysteinyl-tRNA(Sec). The polypeptide is Serine--tRNA ligase (Pelotomaculum thermopropionicum (strain DSM 13744 / JCM 10971 / SI)).